The chain runs to 1437 residues: Histone-lysine N-methyltransferase NSD3 (1437 aa).

2 disordered regions span residues 121–157 and 181–252; these read PHEI…KLKI and QASE…PVQP. The span at 128 to 139 shows a compositional bias: pro residues; it reads PSPPQPPPPPSV. A Phosphoserine modification is found at Ser-150. Residues 154–157 carry the KIKL motif; that stretch reads KLKI. Residues 187–201 show a composition bias toward basic residues; the sequence is KSKHESRKEKRKKSN. The span at 202-248 shows a compositional bias: basic and acidic residues; it reads KHDSSRSEERKSHKIPKLEPEEQNRPNERVDTVSEKPREEPVLKEEA. Residues Lys-218 and Lys-245 each participate in a glycyl lysine isopeptide (Lys-Gly) (interchain with G-Cter in SUMO2) cross-link. The PWWP 1 domain maps to 270–333; that stretch reads VGDLVWSKVG…EKRVREYKGH (64 aa). Disordered stretches follow at residues 344 to 365 and 406 to 465; these read TKQA…QRER and AKKS…EPPP. Residue Lys-413 forms a Glycyl lysine isopeptide (Lys-Gly) (interchain with G-Cter in SUMO2) linkage. The span at 425-445 shows a compositional bias: polar residues; it reads VLNTQPEQTNAGEVASSLSST. Position 457 is a phosphoserine (Ser-457). Glycyl lysine isopeptide (Lys-Gly) (interchain with G-Cter in SUMO2) cross-links involve residues Lys-502 and Lys-532. Residues 540-696 are disordered; that stretch reads QDRLIISTPN…DSSLSRRGTG (157 aa). Polar residues predominate over residues 546–571; the sequence is STPNQRNEKPTQSVSSPEATSGSTGS. A compositionally biased stretch (basic and acidic residues) spans 583-595; the sequence is TRSESEKSTEVVP. Phosphoserine occurs at positions 585, 587, and 590. A Glycyl lysine isopeptide (Lys-Gly) (interchain with G-Cter in SUMO2) cross-link involves residue Lys-628. At Ser-655 the chain carries Phosphoserine. Residues 682–692 are compositionally biased toward polar residues; it reads DVQSMDSSLSR. 3 consecutive PHD-type zinc fingers follow at residues 701–748, 749–805, and 862–955; these read DTVC…CKTG, QHPC…CSME, and VGFC…CKAG. Lys-790 carries the N6-acetyllysine modification. The 63-residue stretch at 960-1022 folds into the PWWP 2 domain; sequence YKQIVWVKLG…QGRVFPYVEG (63 aa). Positions 1033–1069 form a coiled coil; that stretch reads INKTFKKALEEAAKRFQELKAQRESKEALEIEKNSRK. The 51-residue stretch at 1093–1143 folds into the AWS domain; sequence SEIPRCNCKPADENPCGLESECLNRMLQYECHPQVCPAGDRCQNQCFTKRL. The region spanning 1145–1262 is the SET domain; sequence PDAEIIKTER…AGMELTFNYN (118 aa). Residue Lys-1151 forms a Glycyl lysine isopeptide (Lys-Gly) (interchain with G-Cter in SUMO2) linkage. Residues 1269-1285 enclose the Post-SET domain; it reads GRTECHCGADNCSGFLG. The PHD-type 4; atypical zinc-finger motif lies at 1321-1368; it reads EDYCFQCGDGGELVMCDKKDCPKAYHLLCLNLTQPPYGKWECPWHQCD.

This sequence belongs to the class V-like SAM-binding methyltransferase superfamily. Histone-lysine methyltransferase family. SET2 subfamily. In terms of assembly, interacts with BRD4. Interacts (via KIKL motif) with BRD3 (via NET domain). Highly expressed in brain, heart and skeletal muscle. Expressed at lower level in liver and lung.

The protein resides in the nucleus. It is found in the chromosome. The catalysed reaction is L-lysyl(4)-[histone H3] + 2 S-adenosyl-L-methionine = N(6),N(6)-dimethyl-L-lysyl(4)-[histone H3] + 2 S-adenosyl-L-homocysteine + 2 H(+). It carries out the reaction L-lysyl(27)-[histone H3] + 2 S-adenosyl-L-methionine = N(6),N(6)-dimethyl-L-lysyl(27)-[histone H3] + 2 S-adenosyl-L-homocysteine + 2 H(+). Histone methyltransferase. Preferentially dimethylates 'Lys-4' and 'Lys-27' of histone H3 forming H3K4me2 and H3K27me2. H3 'Lys-4' methylation represents a specific tag for epigenetic transcriptional activation, while 'Lys-27' is a mark for transcriptional repression. The chain is Histone-lysine N-methyltransferase NSD3 from Homo sapiens (Human).